Here is a 201-residue protein sequence, read N- to C-terminus: Single-stranded DNA-binding protein, mitochondrial (201 aa).

Residues V71–Y184 enclose the SSB domain.

It is found in the mitochondrion. Binds to ss-DNA. The protein is Single-stranded DNA-binding protein, mitochondrial of Arabidopsis thaliana (Mouse-ear cress).